A 479-amino-acid chain; its full sequence is Zinc metalloproteinase/disintegrin PMMP-1 (479 aa).

Positions Met1–Ser20 are cleaved as a signal peptide. Positions Ile21–Val188 are excised as a propeptide. The Peptidase M12B domain occupies Arg194–Pro390. Disulfide bonds link Cys305–Cys385, Cys345–Cys369, and Cys347–Cys352. His330 contributes to the Zn(2+) binding site. Glu331 is a catalytic residue. Residues His334 and His339 each coordinate Zn(2+). Residue Asn368 is glycosylated (N-linked (GlcNAc...) asparagine). Residues Leu391–Ala408 constitute a propeptide that is removed on maturation. Residues Thr398–Gly479 form the Disintegrin domain. 6 cysteine pairs are disulfide-bonded: Cys412–Cys427, Cys414–Cys422, Cys421–Cys444, Cys435–Cys441, Cys440–Cys465, and Cys453–Cys472. The Cell attachment site motif lies at Arg457–Asp459.

The protein belongs to the venom metalloproteinase (M12B) family. P-II subfamily. P-IIa sub-subfamily. In terms of assembly, monomer. It depends on Zn(2+) as a cofactor. Expressed by the venom gland.

The protein localises to the secreted. Functionally, impairs hemostasis in the envenomed animal. Its function is as follows. Inhibits platelet aggregation. This Protobothrops mucrosquamatus (Taiwan habu) protein is Zinc metalloproteinase/disintegrin PMMP-1.